The following is a 234-amino-acid chain: Leucyl/phenylalanyl-tRNA--protein transferase (234 aa).

It belongs to the L/F-transferase family.

The protein localises to the cytoplasm. The catalysed reaction is N-terminal L-lysyl-[protein] + L-leucyl-tRNA(Leu) = N-terminal L-leucyl-L-lysyl-[protein] + tRNA(Leu) + H(+). The enzyme catalyses N-terminal L-arginyl-[protein] + L-leucyl-tRNA(Leu) = N-terminal L-leucyl-L-arginyl-[protein] + tRNA(Leu) + H(+). It catalyses the reaction L-phenylalanyl-tRNA(Phe) + an N-terminal L-alpha-aminoacyl-[protein] = an N-terminal L-phenylalanyl-L-alpha-aminoacyl-[protein] + tRNA(Phe). In terms of biological role, functions in the N-end rule pathway of protein degradation where it conjugates Leu, Phe and, less efficiently, Met from aminoacyl-tRNAs to the N-termini of proteins containing an N-terminal arginine or lysine. The chain is Leucyl/phenylalanyl-tRNA--protein transferase from Shigella sonnei (strain Ss046).